The primary structure comprises 333 residues: L-lactate dehydrogenase B chain (333 aa).

Residues 29 to 57 and arginine 99 each bind NAD(+); that span reads GQVG…LEDK. Substrate contacts are provided by arginine 106, asparagine 138, and arginine 169. An NAD(+)-binding site is contributed by asparagine 138. Histidine 193 functions as the Proton acceptor in the catalytic mechanism. Threonine 248 is a binding site for substrate.

The protein belongs to the LDH/MDH superfamily. LDH family. In terms of assembly, homotetramer.

Its subcellular location is the cytoplasm. It carries out the reaction (S)-lactate + NAD(+) = pyruvate + NADH + H(+). Its pathway is fermentation; pyruvate fermentation to lactate; (S)-lactate from pyruvate: step 1/1. Its function is as follows. Interconverts simultaneously and stereospecifically pyruvate and lactate with concomitant interconversion of NADH and NAD(+). This is L-lactate dehydrogenase B chain (LDHB) from Sceloporus woodi (Florida scrub lizard).